We begin with the raw amino-acid sequence, 264 residues long: Protein DSE2 (264 aa).

An N-terminal signal peptide occupies residues 1-23 (MQFKKSSIVSFLSLLGSLTKAAA). A compositionally biased stretch (low complexity) spans 75–92 (TRESVVTSTLSSTSLLPE). The interval 75-213 (TRESVVTSTL…STSTSSSSVL (139 aa)) is disordered. Residues 93–104 (TTEESTQEDEQT) are compositionally biased toward acidic residues. Low complexity-rich tracts occupy residues 105–147 (TDFT…PTTS), 157–168 (STSVITTKSTSK), and 178–211 (TSTLTPTVTSETTESTSAETLSSTDKSTSTSSSS). Asp-247 is lipidated: GPI-anchor amidated aspartate. Positions 248 to 264 (AATTYTKTRTVYATISS) are cleaved as a propeptide — removed in mature form.

The protein resides in the secreted. It is found in the cell wall. It localises to the membrane. Its function is as follows. Involved in pseudohyphal growth, cell wall metabolism and required for the separation of the mother and daughter cells. The protein is Protein DSE2 (DSE2) of Kluyveromyces lactis (strain ATCC 8585 / CBS 2359 / DSM 70799 / NBRC 1267 / NRRL Y-1140 / WM37) (Yeast).